The sequence spans 231 residues: 5'-methylthioadenosine/S-adenosylhomocysteine nucleosidase (231 aa).

Glu12 serves as the catalytic Proton acceptor. Residues Gly78, Met153, and Met174–Glu175 contribute to the substrate site. The Proton donor role is filled by Asp198.

It belongs to the PNP/UDP phosphorylase family. MtnN subfamily.

The enzyme catalyses S-adenosyl-L-homocysteine + H2O = S-(5-deoxy-D-ribos-5-yl)-L-homocysteine + adenine. The catalysed reaction is S-methyl-5'-thioadenosine + H2O = 5-(methylsulfanyl)-D-ribose + adenine. It catalyses the reaction 5'-deoxyadenosine + H2O = 5-deoxy-D-ribose + adenine. It participates in amino-acid biosynthesis; L-methionine biosynthesis via salvage pathway; S-methyl-5-thio-alpha-D-ribose 1-phosphate from S-methyl-5'-thioadenosine (hydrolase route): step 1/2. In terms of biological role, catalyzes the irreversible cleavage of the glycosidic bond in both 5'-methylthioadenosine (MTA) and S-adenosylhomocysteine (SAH/AdoHcy) to adenine and the corresponding thioribose, 5'-methylthioribose and S-ribosylhomocysteine, respectively. Also cleaves 5'-deoxyadenosine, a toxic by-product of radical S-adenosylmethionine (SAM) enzymes, into 5-deoxyribose and adenine. The polypeptide is 5'-methylthioadenosine/S-adenosylhomocysteine nucleosidase (Bacillus cytotoxicus (strain DSM 22905 / CIP 110041 / 391-98 / NVH 391-98)).